Reading from the N-terminus, the 189-residue chain is Threonylcarbamoyl-AMP synthase (189 aa).

The 184-residue stretch at 6–189 folds into the YrdC-like domain; it reads TAIFTPIIDA…VLTGEQIRQG (184 aa).

The protein belongs to the SUA5 family. TsaC subfamily.

It is found in the cytoplasm. The enzyme catalyses L-threonine + hydrogencarbonate + ATP = L-threonylcarbamoyladenylate + diphosphate + H2O. Its function is as follows. Required for the formation of a threonylcarbamoyl group on adenosine at position 37 (t(6)A37) in tRNAs that read codons beginning with adenine. Catalyzes the conversion of L-threonine, HCO(3)(-)/CO(2) and ATP to give threonylcarbamoyl-AMP (TC-AMP) as the acyladenylate intermediate, with the release of diphosphate. The chain is Threonylcarbamoyl-AMP synthase from Serratia proteamaculans (strain 568).